A 299-amino-acid chain; its full sequence is MSEFRSGFVCFVGRPNTGKSTLTNALVGTKVAITSNRPQTTRHTIRGIVHRDEFQIILVDTPGLHRPRTLLGQRLNDLVKTTYSEVDVIGLCIPADEAIGPGDRWIHEQIRAVAPRTTLVVIVTKIDKVPRDRVAAQLMAVSELVGPDAEIVPVSATTGEQLDVLTDVLAGKLPPGPAFYPDGELTDEPEETLMAELIREAALEGVRDELPHSLAVVIDEVSPREDRDDLIDVHAILYVERDSQKGIVIGKGGARLREVGTAARLQIEKLLGTKVYLDLRVKIAKNWQRDPKQLGRLGF.

One can recognise an Era-type G domain in the interval R5 to P175. The interval G13 to S20 is G1. G13–S20 lines the GTP pocket. The tract at residues Q39 to H43 is G2. Positions D60–G63 are G3. GTP-binding positions include D60 to L64 and T124 to D127. The interval T124–D127 is G4. The G5 stretch occupies residues V154–A156. Residues V206–K285 form the KH type-2 domain.

It belongs to the TRAFAC class TrmE-Era-EngA-EngB-Septin-like GTPase superfamily. Era GTPase family. Monomer.

The protein localises to the cell envelope. Its subcellular location is the secreted. It is found in the cell wall. Exhibits GTPase activity. Binds RNA but is probably not involved in ribosome assembly in mycobacteria. The protein is GTPase Era of Mycobacterium sp. (strain KMS).